We begin with the raw amino-acid sequence, 164 residues long: Transcription elongation factor GreA (164 aa).

A coiled-coil region spans residues 50–76 (YHAAREEQGQQEARIRQLQELLNNAKV).

It belongs to the GreA/GreB family.

In terms of biological role, necessary for efficient RNA polymerase transcription elongation past template-encoded arresting sites. The arresting sites in DNA have the property of trapping a certain fraction of elongating RNA polymerases that pass through, resulting in locked ternary complexes. Cleavage of the nascent transcript by cleavage factors such as GreA or GreB allows the resumption of elongation from the new 3'terminus. GreA releases sequences of 2 to 3 nucleotides. The polypeptide is Transcription elongation factor GreA (Mycolicibacterium smegmatis (strain ATCC 700084 / mc(2)155) (Mycobacterium smegmatis)).